The following is a 660-amino-acid chain: Tripartite terminase subunit 3 (660 aa).

The short motif at 203–210 (VPRRHGKT) is the Walker A motif element. The short motif at 294–299 (ILLVDE) is the Walker B motif element. Catalysis depends on E299, which acts as the For ATPase activity. Catalysis depends on for nuclease activity residues D452, E523, and D637.

This sequence belongs to the herpesviridae TRM3 protein family. In terms of assembly, interacts with the terminase subunits TRM1 and TRM2. Interacts with portal protein.

The protein resides in the host nucleus. Its function is as follows. Component of the molecular motor that translocates viral genomic DNA in empty capsid during DNA packaging. Forms a tripartite terminase complex together with TRM1 and TRM2 in the host cytoplasm. Once the complex reaches the host nucleus, it interacts with the capsid portal vertex. This portal forms a ring in which genomic DNA is translocated into the capsid. TRM3 carries an RNase H-like nuclease activity that plays an important role for the cleavage of concatemeric viral DNA into unit length genomes. The protein is Tripartite terminase subunit 3 of Elephas maximus (Indian elephant).